Here is a 518-residue protein sequence, read N- to C-terminus: Glutamate--cysteine ligase (518 aa).

This sequence belongs to the glutamate--cysteine ligase type 1 family. Type 1 subfamily.

It carries out the reaction L-cysteine + L-glutamate + ATP = gamma-L-glutamyl-L-cysteine + ADP + phosphate + H(+). It participates in sulfur metabolism; glutathione biosynthesis; glutathione from L-cysteine and L-glutamate: step 1/2. In Shigella sonnei (strain Ss046), this protein is Glutamate--cysteine ligase.